The following is a 186-amino-acid chain: Probable GPI-anchored cupredoxin ARB_05732-1 (186 aa).

A signal peptide spans 1 to 18; the sequence is MVNMNILTTVALAGLAAA. Position 55 (H55) interacts with Cu cation. C66 and C104 are joined by a disulfide. The N-linked (GlcNAc...) asparagine glycan is linked to N87. Cu cation contacts are provided by C98 and H103. Residues 130–160 form a disordered region; it reads GAGNGQAPSRVNNGSSGSGTPTSGGAPAATS. Residue N142 is glycosylated (N-linked (GlcNAc...) asparagine). The segment covering 143–160 has biased composition (low complexity); it reads GSSGSGTPTSGGAPAATS. G153 is lipidated: GPI-anchor amidated glycine. A propeptide spans 154 to 186 (removed in mature form); the sequence is GAPAATSPNAASSLTFSGAAALVAMGGAWIGLL.

Belongs to the multicopper oxidase family. Cu cation is required as a cofactor.

It localises to the cell membrane. Its subcellular location is the secreted. In terms of biological role, probable electron transfer copper protein that serves as a direct electron donor. This Arthroderma benhamiae (strain ATCC MYA-4681 / CBS 112371) (Trichophyton mentagrophytes) protein is Probable GPI-anchored cupredoxin ARB_05732-1.